The chain runs to 214 residues: ER lumen protein-retaining receptor 3 (214 aa).

Over 1-4 (MNVF) the chain is Lumenal. Residues 5-24 (RISGDVSHLLAIIILLLKMW) traverse the membrane as a helical segment. Residues 25–32 (KSKSCAGI) lie on the Cytoplasmic side of the membrane. The chain crosses the membrane as a helical span at residues 33-52 (SGKSQLLFALVFTTRYLDLF). Positions 47–48 (RY) are interaction with the K-D-E-L motif on target proteins. The Lumenal segment spans residues 53–58 (TVFISA). The helical transmembrane segment at 59–79 (YNTVMKIVFLVCAYVTVYLIY) threads the bilayer. The Cytoplasmic segment spans residues 80-92 (GKFRKAYDSENDT). A helical transmembrane segment spans residues 93–110 (FRLEFLLVPVIGLSFLEN). Over 111–116 (YEFTPL) the chain is Lumenal. The chain crosses the membrane as a helical span at residues 117-135 (EILWTFSIYLESVAILPQL). Over 136–149 (FMISKTGEAESITT) the chain is Cytoplasmic. Residues 150-168 (HYLFFLGLYRVLYLANWIW) traverse the membrane as a helical segment. The tract at residues 159-169 (RVLYLANWIWR) is interaction with the K-D-E-L motif on target proteins. At 169-178 (RYHTEKFYDQ) the chain is on the lumenal side. Residues 179-199 (IAVVSGVVQTIFYFDFFYLYI) traverse the membrane as a helical segment. The Cytoplasmic segment spans residues 200–214 (TKVLKGKKLSLPMPV). The interval 204–207 (KGKK) is important for recycling of cargo proteins with the sequence motif K-D-E-L from the Golgi to the endoplasmic reticulum.

The protein belongs to the ERD2 family.

Its subcellular location is the endoplasmic reticulum membrane. It is found in the golgi apparatus membrane. It localises to the cytoplasmic vesicle. The protein resides in the COPI-coated vesicle membrane. Receptor for the C-terminal sequence motif K-D-E-L that is present on endoplasmic reticulum resident proteins and that mediates their recycling from the Golgi back to the endoplasmic reticulum. The chain is ER lumen protein-retaining receptor 3 (kdelr3) from Xenopus tropicalis (Western clawed frog).